A 252-amino-acid chain; its full sequence is 3-dehydroquinate dehydratase (252 aa).

3-dehydroquinate contacts are provided by residues Ser21, 46-48, and Arg82; that span reads EWR. His143 acts as the Proton donor/acceptor in catalysis. Lys170 serves as the catalytic Schiff-base intermediate with substrate. Positions 213, 232, and 236 each coordinate 3-dehydroquinate.

This sequence belongs to the type-I 3-dehydroquinase family. Homodimer.

The catalysed reaction is 3-dehydroquinate = 3-dehydroshikimate + H2O. It functions in the pathway metabolic intermediate biosynthesis; chorismate biosynthesis; chorismate from D-erythrose 4-phosphate and phosphoenolpyruvate: step 3/7. Its function is as follows. Involved in the third step of the chorismate pathway, which leads to the biosynthesis of aromatic amino acids. Catalyzes the cis-dehydration of 3-dehydroquinate (DHQ) and introduces the first double bond of the aromatic ring to yield 3-dehydroshikimate. In Escherichia coli (strain K12 / MC4100 / BW2952), this protein is 3-dehydroquinate dehydratase.